Reading from the N-terminus, the 150-residue chain is Cytochrome c oxidase subunit 5A, mitochondrial (150 aa).

The N-terminal 41 residues, 1 to 41 (MLGAALRRCAVAAAARAGPRGLLHSAPTPGPAAAIQSVRCY), are a transit peptide targeting the mitochondrion. Residues 2-17 (LGAALRRCAVAAAARA) carry the SIFI-degron motif. Residues K87 and K113 each carry the N6-acetyllysine modification. A Phosphothreonine modification is found at T141.

It belongs to the cytochrome c oxidase subunit 5A family. In terms of assembly, component of the cytochrome c oxidase (complex IV, CIV), a multisubunit enzyme composed of 14 subunits. The complex is composed of a catalytic core of 3 subunits MT-CO1, MT-CO2 and MT-CO3, encoded in the mitochondrial DNA, and 11 supernumerary subunits COX4I, COX5A, COX5B, COX6A, COX6B, COX6C, COX7A, COX7B, COX7C, COX8 and NDUFA4, which are encoded in the nuclear genome. The complex exists as a monomer or a dimer and forms supercomplexes (SCs) in the inner mitochondrial membrane with NADH-ubiquinone oxidoreductase (complex I, CI) and ubiquinol-cytochrome c oxidoreductase (cytochrome b-c1 complex, complex III, CIII), resulting in different assemblies (supercomplex SCI(1)III(2)IV(1) and megacomplex MCI(2)III(2)IV(2)). Interacts with AFG1L. Interacts with RAB5IF. In response to mitochondrial stress, the precursor protein is ubiquitinated by the SIFI complex in the cytoplasm before mitochondrial import, leading to its degradation. Within the SIFI complex, UBR4 initiates ubiquitin chain that are further elongated or branched by KCMF1.

Its subcellular location is the mitochondrion inner membrane. The protein operates within energy metabolism; oxidative phosphorylation. Component of the cytochrome c oxidase, the last enzyme in the mitochondrial electron transport chain which drives oxidative phosphorylation. The respiratory chain contains 3 multisubunit complexes succinate dehydrogenase (complex II, CII), ubiquinol-cytochrome c oxidoreductase (cytochrome b-c1 complex, complex III, CIII) and cytochrome c oxidase (complex IV, CIV), that cooperate to transfer electrons derived from NADH and succinate to molecular oxygen, creating an electrochemical gradient over the inner membrane that drives transmembrane transport and the ATP synthase. Cytochrome c oxidase is the component of the respiratory chain that catalyzes the reduction of oxygen to water. Electrons originating from reduced cytochrome c in the intermembrane space (IMS) are transferred via the dinuclear copper A center (CU(A)) of subunit 2 and heme A of subunit 1 to the active site in subunit 1, a binuclear center (BNC) formed by heme A3 and copper B (CU(B)). The BNC reduces molecular oxygen to 2 water molecules using 4 electrons from cytochrome c in the IMS and 4 protons from the mitochondrial matrix. This Plecturocebus donacophilus (Bolivian gray titi monkey) protein is Cytochrome c oxidase subunit 5A, mitochondrial (COX5A).